Reading from the N-terminus, the 728-residue chain is Cellulose synthase-like protein E6 (728 aa).

Helical transmembrane passes span 21 to 43 and 53 to 73; these read AVYR…YRAT and AAWL…VITQ. Catalysis depends on residues Asp-141 and Asp-446. The next 5 helical transmembrane spans lie at 523-543, 546-566, 646-666, 669-689, and 707-727; these read LWAA…LGLV, TPLF…VFCV, PEFV…VAGL, IMAG…LIVI, and IPLP…LLPI.

This sequence belongs to the glycosyltransferase 2 family. Plant cellulose synthase-like E subfamily.

The protein resides in the golgi apparatus membrane. Thought to be a Golgi-localized beta-glycan synthase that polymerize the backbones of noncellulosic polysaccharides (hemicelluloses) of plant cell wall. The protein is Cellulose synthase-like protein E6 (CSLE6) of Oryza sativa subsp. japonica (Rice).